A 272-amino-acid polypeptide reads, in one-letter code: Phosphate import ATP-binding protein PstB (272 aa).

The ABC transporter domain occupies 20–267 (VKKEVVYETN…PADQRTADYI (248 aa)). 58–65 (GPSGCGKS) serves as a coordination point for ATP.

This sequence belongs to the ABC transporter superfamily. Phosphate importer (TC 3.A.1.7) family. The complex is composed of two ATP-binding proteins (PstB), two transmembrane proteins (PstC and PstA) and a solute-binding protein (PstS).

The protein localises to the cell membrane. The enzyme catalyses phosphate(out) + ATP + H2O = ADP + 2 phosphate(in) + H(+). Functionally, part of the ABC transporter complex PstSACB involved in phosphate import. Responsible for energy coupling to the transport system. This chain is Phosphate import ATP-binding protein PstB, found in Geobacillus kaustophilus (strain HTA426).